We begin with the raw amino-acid sequence, 235 residues long: Orotidine 5'-phosphate decarboxylase (235 aa).

Substrate contacts are provided by residues Asp-10, Lys-32, 59 to 68, Thr-123, Arg-184, Gln-193, Gly-213, and Arg-214; that span reads DLKLHDIPNT. The active-site Proton donor is Lys-61.

This sequence belongs to the OMP decarboxylase family. Type 1 subfamily. Homodimer.

It catalyses the reaction orotidine 5'-phosphate + H(+) = UMP + CO2. It participates in pyrimidine metabolism; UMP biosynthesis via de novo pathway; UMP from orotate: step 2/2. In terms of biological role, catalyzes the decarboxylation of orotidine 5'-monophosphate (OMP) to uridine 5'-monophosphate (UMP). The protein is Orotidine 5'-phosphate decarboxylase of Paramagnetospirillum magneticum (strain ATCC 700264 / AMB-1) (Magnetospirillum magneticum).